Here is a 134-residue protein sequence, read N- to C-terminus: Mini-ribonuclease 3 (134 aa).

Residue Asp22 is part of the active site.

This sequence belongs to the MrnC RNase family. Homodimer. Mg(2+) is required as a cofactor.

It is found in the cytoplasm. Its function is as follows. Involved in correct processing of both the 5' and 3' ends of 23S rRNA precursor. Processes 30S rRNA precursor transcript even in absence of ribonuclease 3 (Rnc); Rnc processes 30S rRNA into smaller rRNA precursors. The chain is Mini-ribonuclease 3 from Staphylococcus aureus (strain NCTC 8325 / PS 47).